Reading from the N-terminus, the 555-residue chain is Glutamine--tRNA ligase (555 aa).

Residues 35–45 (PEPNGYLHIGH) carry the 'HIGH' region motif. ATP contacts are provided by residues 36 to 38 (EPN) and 42 to 48 (HIGHAKS). L-glutamine-binding residues include aspartate 68 and tyrosine 213. ATP contacts are provided by residues threonine 232, 262-263 (RL), and 270-272 (MSK). Positions 269-273 (VMSKR) match the 'KMSKS' region motif.

This sequence belongs to the class-I aminoacyl-tRNA synthetase family. As to quaternary structure, monomer.

It is found in the cytoplasm. It carries out the reaction tRNA(Gln) + L-glutamine + ATP = L-glutaminyl-tRNA(Gln) + AMP + diphosphate. The protein is Glutamine--tRNA ligase of Photobacterium profundum (strain SS9).